The chain runs to 299 residues: Putative peptidyl-prolyl cis-trans isomerase jhp_0161 (299 aa).

Residues 1-21 (MKKNILNLALVGALSASFLMA) form the signal peptide. Residues 154 to 253 (KQEAHARHIL…FGYHIIYLIS (100 aa)) form the PpiC domain.

The catalysed reaction is [protein]-peptidylproline (omega=180) = [protein]-peptidylproline (omega=0). The protein is Putative peptidyl-prolyl cis-trans isomerase jhp_0161 of Helicobacter pylori (strain J99 / ATCC 700824) (Campylobacter pylori J99).